We begin with the raw amino-acid sequence, 1252 residues long: Calmodulin-regulated spectrin-associated protein 3 (1252 aa).

Disordered regions lie at residues 183 to 205 (KTEQ…SPAQ), 331 to 385 (HAVS…SMSH), 429 to 457 (SVSS…ESGD), 479 to 604 (GAAD…MSEL), 638 to 697 (FLQV…LGDY), 712 to 935 (QRDM…EAAR), 962 to 981 (TTRA…GDFT), 996 to 1030 (DLDK…DDSA), and 1063 to 1114 (PNNL…TGPR). Position 184 is a phosphothreonine (Thr184). Position 193 is a phosphoserine (Ser193). A Calponin-homology (CH) domain is found at 203–312 (PAQPSIRYRK…LVVLLAEMYM (110 aa)). 6 positions are modified to phosphoserine: Ser334, Ser347, Ser351, Ser368, Ser373, and Ser382. Residues 335 to 353 (PRNTETVPSQNNSGSSSPV) show a composition bias toward polar residues. Residues 359–373 (PLLSPGGPQSPLRGS) show a composition bias toward low complexity. Composition is skewed to polar residues over residues 374–383 (TGSLKSSPSM), 441–450 (VSTSSRNSAQ), and 525–534 (ENPSKSSPCS). Residues Ser548, Ser555, and Ser561 each carry the phosphoserine modification. Basic and acidic residues predominate over residues 569–580 (AERKKQLVKAEA). The stretch at 595–629 (EALSSEMSELGARLEEKRRAIEAQKRRIEAIFAKH) forms a coiled coil. Ser683 bears the Phosphoserine mark. Residues 696–727 (DYNRAVSKLSAALSSLQRDMQRLTDQQQRLLA) are a coiled coil. Over residues 729-739 (PEAPGPAPPPA) the composition is skewed to pro residues. A compositionally biased stretch (low complexity) spans 740-768 (AWVIPGPATGPKAASPSPARRAPAARRSP). Residue Ser767 is modified to Phosphoserine. A Phosphothreonine modification is found at Thr797. Phosphoserine occurs at positions 812 and 881. Positions 812-825 (SPSQVPVQTRSSIL) are enriched in polar residues. Positions 887–934 (YKDEDKPEDEMAQKRASLLERQQRRVEEARRRKQWQEAEKEQKREEAA) are enriched in basic and acidic residues. Positions 896-943 (EMAQKRASLLERQQRRVEEARRRKQWQEAEKEQKREEAARLAQEAPGL) form a coiled coil. A Phosphoserine modification is found at Ser1077. In terms of domain architecture, CKK spans 1112–1246 (GPRLYKEPSA…QSKKPTTPKK (135 aa)).

It belongs to the CAMSAP1 family. As to quaternary structure, interacts with PLEKHA7. Interacts with CAMSAP2. Interacts with KATNA1 and KATNB1; leading to regulate the length of CAMSAP3-decorated microtubule stretches. Interacts with AKAP9; regulating Golgi assembly in epithelial cells. Interacts with MACF1. Interacts with isoform C of CDH23; leading to inhibit CAMSAP3 ability to induce microtubule bundle formation. Interacts with AKNA. Expressed at the apical surface of respiratory epithelia, as well as in the acini of submucosal glands (at protein level). In cochlea, restricted to the organ of Corti and increases during development (at protein level). Highly expressed in both sensory hair cells and supporting cells.

It localises to the cytoplasm. The protein localises to the cytoskeleton. Its subcellular location is the cell junction. It is found in the adherens junction. The protein resides in the cilium axoneme. It localises to the cilium basal body. Its function is as follows. Key microtubule-organizing protein that specifically binds the minus-end of non-centrosomal microtubules and regulates their dynamics and organization. Specifically recognizes growing microtubule minus-ends and autonomously decorates and stabilizes microtubule lattice formed by microtubule minus-end polymerization. Acts on free microtubule minus-ends that are not capped by microtubule-nucleating proteins or other factors and protects microtubule minus-ends from depolymerization. In addition, it also reduces the velocity of microtubule polymerization. Required for the biogenesis and the maintenance of zonula adherens by anchoring the minus-end of microtubules to zonula adherens and by recruiting the kinesin KIFC3 to those junctional sites. Required for orienting the apical-to-basal polarity of microtubules in epithelial cells: acts by tethering non-centrosomal microtubules to the apical cortex, leading to their longitudinal orientation. Plays a key role in early embryos, which lack centrosomes: accumulates at the microtubule bridges that connect pairs of cells and enables the formation of a non-centrosomal microtubule-organizing center that directs intracellular transport in the early embryo. Couples non-centrosomal microtubules with actin: interaction with MACF1 at the minus ends of non-centrosomal microtubules, tethers the microtubules to actin filaments, regulating focal adhesion size and cell migration. Plays a key role in the generation of non-centrosomal microtubules by accumulating in the pericentrosomal region and cooperating with KATNA1 to release non-centrosomal microtubules from the centrosome. Through the microtubule cytoskeleton, also regulates the organization of cellular organelles including the Golgi and the early endosomes. Through interaction with AKAP9, involved in translocation of Golgi vesicles in epithelial cells, where microtubules are mainly non-centrosomal. Plays an important role in motile cilia function by facilitatating proper orientation of basal bodies and formation of central microtubule pairs in motile cilia. This chain is Calmodulin-regulated spectrin-associated protein 3, found in Mus musculus (Mouse).